The following is a 130-amino-acid chain: Large ribosomal subunit protein bL12 (130 aa).

The protein belongs to the bacterial ribosomal protein bL12 family. In terms of assembly, homodimer. Part of the ribosomal stalk of the 50S ribosomal subunit. Forms a multimeric L10(L12)X complex, where L10 forms an elongated spine to which 2 to 4 L12 dimers bind in a sequential fashion. Binds GTP-bound translation factors.

In terms of biological role, forms part of the ribosomal stalk which helps the ribosome interact with GTP-bound translation factors. Is thus essential for accurate translation. In Prochlorococcus marinus (strain SARG / CCMP1375 / SS120), this protein is Large ribosomal subunit protein bL12.